The sequence spans 121 residues: Small ribosomal subunit protein bS16 (121 aa).

The segment at 88 to 121 (GKAKLEKEKKAKAKTKEEENEGSKTESGSNEAES) is disordered. Residues 90–111 (AKLEKEKKAKAKTKEEENEGSK) show a composition bias toward basic and acidic residues. Residues 112-121 (TESGSNEAES) show a composition bias toward polar residues.

The protein belongs to the bacterial ribosomal protein bS16 family.

This Prochlorococcus marinus (strain MIT 9215) protein is Small ribosomal subunit protein bS16.